A 38-amino-acid polypeptide reads, in one-letter code: Antifungal protein 5 (38 aa).

The protein belongs to the plant LTP family.

Functionally, possesses potent antifungal activity against F.graminearum but not P.infestans. The polypeptide is Antifungal protein 5 (Malva parviflora (Little mallow)).